We begin with the raw amino-acid sequence, 123 residues long: Large ribosomal subunit protein uL24 (123 aa).

This sequence belongs to the universal ribosomal protein uL24 family. As to quaternary structure, part of the 50S ribosomal subunit.

In terms of biological role, one of two assembly initiator proteins, it binds directly to the 5'-end of the 23S rRNA, where it nucleates assembly of the 50S subunit. Functionally, one of the proteins that surrounds the polypeptide exit tunnel on the outside of the subunit. In Solibacter usitatus (strain Ellin6076), this protein is Large ribosomal subunit protein uL24.